The primary structure comprises 1010 residues: Eukaryotic translation initiation factor 4E transporter (1010 aa).

Residues 10–16 carry the YXXXXLphi motif motif; that stretch reads YSKVDLL. 5 disordered regions span residues 154-182, 196-277, 289-320, 354-391, and 921-960; these read GSNSEESNEGINTCASKGKAASSPSRKGS, PDHD…RLVE, YDSKKSFDRQGINNRRISGKEPFSTQSRSKRG, NEERSVTEDKNNQIQQLDKNLDAQASKDEASMRNSNDS, and QSNPQMSPPVPGFSDSSDSGNVIKANSLTSPSYQRDERIS. Positions 201 to 211 are enriched in polar residues; sequence CMSSSPTFSTS. Basic and acidic residues predominate over residues 227–247; the sequence is DNWDYKNEKTVEASIENEKET. Polar residues predominate over residues 248–263; it reads SPNGSGSTSSLNQHNQ. Basic and acidic residues-rich tracts occupy residues 354 to 364 and 372 to 384; these read NEERSVTEDKN and KNLDAQASKDEAS. The segment covering 934-953 has biased composition (polar residues); sequence SDSSDSGNVIKANSLTSPSY.

Belongs to the 4E-T/EIF4E-T family. Interacts (via YXXXXLphi motif) with eIF4E1. Interacts with DDX6/me31B. Expressed in all larval and adult organs and tissues, with highest levels in the ovary.

The protein localises to the cytoplasm. The protein resides in the P-body. Its subcellular location is the nucleus. EIF4E1-binding protein that regulates translation and stability of mRNAs in processing bodies (P-bodies). Probably plays a role in P-bodies to coordinate the storage of translationally inactive mRNAs in the cytoplasm and prevent their degradation. Acts as a binding platform for multiple RNA-binding proteins. Required for the formation of P-bodies. This chain is Eukaryotic translation initiation factor 4E transporter, found in Drosophila melanogaster (Fruit fly).